Here is a 146-residue protein sequence, read N- to C-terminus: Acidic phospholipase A2 2 (146 aa).

The N-terminal stretch at 1-21 is a signal peptide; it reads MTPAHLLILAAVCVSPLGASS. Positions 22–27 are excised as a propeptide; the sequence is SRPMPL. Intrachain disulfides connect Cys-38–Cys-98, Cys-53–Cys-145, Cys-55–Cys-71, Cys-70–Cys-126, Cys-77–Cys-119, Cys-87–Cys-112, and Cys-105–Cys-117. 3 residues coordinate Ca(2+): Tyr-54, Gly-56, and Gly-58. Residue His-74 is part of the active site. Residue Asp-75 participates in Ca(2+) binding. Asp-120 is a catalytic residue.

Belongs to the phospholipase A2 family. Group I subfamily. D49 sub-subfamily. Ca(2+) is required as a cofactor. Expressed by the venom gland.

Its subcellular location is the secreted. The catalysed reaction is a 1,2-diacyl-sn-glycero-3-phosphocholine + H2O = a 1-acyl-sn-glycero-3-phosphocholine + a fatty acid + H(+). Its function is as follows. PLA2 catalyzes the calcium-dependent hydrolysis of the 2-acyl groups in 3-sn-phosphoglycerides. In Naja atra (Chinese cobra), this protein is Acidic phospholipase A2 2.